The sequence spans 164 residues: UBA-like domain-containing protein 2 (164 aa).

Residue Ser2 is modified to N-acetylserine. A disordered region spans residues 128 to 164 (SSPTTFHHLHRPQPTWPPGAQQGGAQQKAMAAMDGQR). Residues 146-164 (GAQQGGAQQKAMAAMDGQR) are compositionally biased toward low complexity.

Belongs to the UBALD family.

In Homo sapiens (Human), this protein is UBA-like domain-containing protein 2 (UBALD2).